The sequence spans 368 residues: Germination protease (368 aa).

A propeptide spanning residues 1–16 (MKNNELDVNQFLIRTD) is cleaved from the precursor.

This sequence belongs to the peptidase A25 family. In terms of assembly, homotetramer. In terms of processing, autoproteolytically processed. The inactive tetrameric zymogen termed p46 autoprocesses to a smaller form termed p41, which is active only during spore germination.

It carries out the reaction Endopeptidase action with P4 Glu or Asp, P1 preferably Glu &gt; Asp, P1' hydrophobic and P2' Ala.. Initiates the rapid degradation of small, acid-soluble proteins during spore germination. This chain is Germination protease, found in Bacillus velezensis (strain DSM 23117 / BGSC 10A6 / LMG 26770 / FZB42) (Bacillus amyloliquefaciens subsp. plantarum).